The chain runs to 565 residues: Sulfite reductase [NADPH] hemoprotein beta-component (565 aa).

[4Fe-4S] cluster contacts are provided by Cys429, Cys435, Cys474, and Cys478. Cys478 lines the siroheme pocket.

The protein belongs to the nitrite and sulfite reductase 4Fe-4S domain family. As to quaternary structure, alpha(8)-beta(8). The alpha component is a flavoprotein, the beta component is a hemoprotein. Siroheme is required as a cofactor. [4Fe-4S] cluster serves as cofactor.

It carries out the reaction hydrogen sulfide + 3 NADP(+) + 3 H2O = sulfite + 3 NADPH + 4 H(+). It functions in the pathway sulfur metabolism; hydrogen sulfide biosynthesis; hydrogen sulfide from sulfite (NADPH route): step 1/1. Component of the sulfite reductase complex that catalyzes the 6-electron reduction of sulfite to sulfide. This is one of several activities required for the biosynthesis of L-cysteine from sulfate. In Shewanella halifaxensis (strain HAW-EB4), this protein is Sulfite reductase [NADPH] hemoprotein beta-component.